A 213-amino-acid chain; its full sequence is Probable transaldolase (213 aa).

Lysine 83 functions as the Schiff-base intermediate with substrate in the catalytic mechanism.

The protein belongs to the transaldolase family. Type 3B subfamily.

The protein localises to the cytoplasm. The catalysed reaction is D-sedoheptulose 7-phosphate + D-glyceraldehyde 3-phosphate = D-erythrose 4-phosphate + beta-D-fructose 6-phosphate. It functions in the pathway carbohydrate degradation; pentose phosphate pathway; D-glyceraldehyde 3-phosphate and beta-D-fructose 6-phosphate from D-ribose 5-phosphate and D-xylulose 5-phosphate (non-oxidative stage): step 2/3. Functionally, transaldolase is important for the balance of metabolites in the pentose-phosphate pathway. This chain is Probable transaldolase, found in Geobacillus sp. (strain WCH70).